We begin with the raw amino-acid sequence, 335 residues long: Probable cytosolic iron-sulfur protein assembly protein Ciao1 (335 aa).

7 WD repeats span residues 12 to 51 (GHKG…WSTK), 57 to 96 (GHKR…FECN), 101 to 140 (GHEN…EFEC), 146 to 185 (SHTQ…NDWD), 192 to 231 (SHTS…NSAG), 250 to 289 (QHSR…KPDE), and 301 to 335 (AHDQ…KVTE).

This sequence belongs to the WD repeat CIA1 family.

In terms of biological role, essential component of the cytosolic iron-sulfur (Fe/S) protein assembly machinery. Required for the maturation of extramitochondrial Fe/S proteins. The sequence is that of Probable cytosolic iron-sulfur protein assembly protein Ciao1 from Drosophila yakuba (Fruit fly).